A 194-amino-acid polypeptide reads, in one-letter code: uncharacterized protein (194 aa).

In terms of domain architecture, HTH tetR-type spans 6-66 (EFDTALVLHR…SAVKSYLEGK (61 aa)). A DNA-binding region (H-T-H motif) is located at residues 29–48 (SLQDLLSHLGIARQSLYDTY).

This is an uncharacterized protein from Bacillus subtilis (strain 168).